A 352-amino-acid chain; its full sequence is Isoflavone-7-O-methyltransferase 6 (352 aa).

118-127 (VLDPTLSGSY) is a binding site for substrate. Residues Gly196, Asp219, Asp239, Met240, and Lys253 each contribute to the S-adenosyl-L-methionine site. His257 acts as the Proton acceptor in catalysis.

It belongs to the class I-like SAM-binding methyltransferase superfamily. Cation-independent O-methyltransferase family. COMT subfamily. As to quaternary structure, homodimer.

The catalysed reaction is a 7-hydroxyisoflavone + S-adenosyl-L-methionine = a 7-methoxyisoflavone + S-adenosyl-L-homocysteine + H(+). It participates in phytoalexin biosynthesis; medicarpin biosynthesis. In terms of biological role, transfers a methyl group to 7-hydroxyls of the isoflavones daidzein, genistein and 6,7,4'-trihydroxyisoflavone. Can also methylate (+)6a-hydroxymaackiain with lower efficiency. The polypeptide is Isoflavone-7-O-methyltransferase 6 (Medicago sativa (Alfalfa)).